The chain runs to 291 residues: Elongation factor Ts (291 aa).

An involved in Mg(2+) ion dislocation from EF-Tu region spans residues 79–82 (TDFV).

The protein belongs to the EF-Ts family.

It localises to the cytoplasm. Associates with the EF-Tu.GDP complex and induces the exchange of GDP to GTP. It remains bound to the aminoacyl-tRNA.EF-Tu.GTP complex up to the GTP hydrolysis stage on the ribosome. The chain is Elongation factor Ts from Dinoroseobacter shibae (strain DSM 16493 / NCIMB 14021 / DFL 12).